The following is a 132-amino-acid chain: Large ribosomal subunit protein bL21 (132 aa).

Residues 111-132 (AAEKPARKPRAKKTNEVTTDGA) are disordered.

Belongs to the bacterial ribosomal protein bL21 family. In terms of assembly, part of the 50S ribosomal subunit. Contacts protein L20.

Functionally, this protein binds to 23S rRNA in the presence of protein L20. The sequence is that of Large ribosomal subunit protein bL21 from Dehalococcoides mccartyi (strain CBDB1).